The sequence spans 192 residues: Flagellar transcriptional regulator FlhC (192 aa).

Zn(2+) is bound by residues C137, C140, C157, and C160.

The protein belongs to the FlhC family. Heterohexamer composed of two FlhC and four FlhD subunits. Each FlhC binds a FlhD dimer, forming a heterotrimer, and a hexamer assembles by dimerization of two heterotrimers. Zn(2+) serves as cofactor.

It is found in the cytoplasm. Functions in complex with FlhD as a master transcriptional regulator that regulates transcription of several flagellar and non-flagellar operons by binding to their promoter region. Activates expression of class 2 flagellar genes, including fliA, which is a flagellum-specific sigma factor that turns on the class 3 genes. Also regulates genes whose products function in a variety of physiological pathways. The polypeptide is Flagellar transcriptional regulator FlhC (Escherichia coli O6:H1 (strain CFT073 / ATCC 700928 / UPEC)).